The sequence spans 266 residues: Thiazole synthase (266 aa).

Lys-106 functions as the Schiff-base intermediate with DXP in the catalytic mechanism. Residues Gly-167, 193-194 (AG), and 215-216 (NT) contribute to the 1-deoxy-D-xylulose 5-phosphate site.

It belongs to the ThiG family. In terms of assembly, homotetramer. Forms heterodimers with either ThiH or ThiS.

It localises to the plastid. The protein resides in the chloroplast. The enzyme catalyses [ThiS sulfur-carrier protein]-C-terminal-Gly-aminoethanethioate + 2-iminoacetate + 1-deoxy-D-xylulose 5-phosphate = [ThiS sulfur-carrier protein]-C-terminal Gly-Gly + 2-[(2R,5Z)-2-carboxy-4-methylthiazol-5(2H)-ylidene]ethyl phosphate + 2 H2O + H(+). The protein operates within cofactor biosynthesis; thiamine diphosphate biosynthesis. In terms of biological role, catalyzes the rearrangement of 1-deoxy-D-xylulose 5-phosphate (DXP) to produce the thiazole phosphate moiety of thiamine. Sulfur is provided by the thiocarboxylate moiety of the carrier protein ThiS. In vitro, sulfur can be provided by H(2)S. This chain is Thiazole synthase, found in Cyanidium caldarium (Red alga).